A 111-amino-acid polypeptide reads, in one-letter code: Colipase (111 aa).

An N-terminal signal peptide occupies residues 1–17 (MEKVLALVLLTLAVAYA). Residues 18–22 (APDPR) constitute a propeptide, enterostatin, activation peptide. 5 disulfide bridges follow: C34–C45, C40–C56, C44–C78, C66–C86, and C80–C104.

It belongs to the colipase family. Forms a 1:1 stoichiometric complex with pancreatic lipase. As to expression, expressed by the pancreas.

Its subcellular location is the secreted. Functionally, colipase is a cofactor of pancreatic lipase. It allows the lipase to anchor itself to the lipid-water interface. Without colipase the enzyme is washed off by bile salts, which have an inhibitory effect on the lipase. Its function is as follows. Enterostatin has a biological activity as a satiety signal. The protein is Colipase (CLPS) of Myocastor coypus (Coypu).